Reading from the N-terminus, the 439-residue chain is Protein ABHD8 (439 aa).

Disordered regions lie at residues 54–75 (HAGPAPIPTPPPPPPEDDPGVK) and 122–148 (ELAEPAGGDTRANPGSGRRRRPRRPKR). The segment covering 58–67 (APIPTPPPPP) has biased composition (pro residues). A compositionally biased stretch (basic residues) spans 138–148 (GRRRRPRRPKR). Residues 169-271 (VLFFIHGVGG…HKVIMINGGG (103 aa)) form the AB hydrolase-1 domain. Residues serine 244, aspartate 362, and histidine 390 each act as charge relay system in the active site. The interval 415–439 (EAEPKLEPKPKPQLLQPEPAPGEEK) is disordered.

The protein belongs to the AB hydrolase superfamily. Interacts with NLRP3 (via NACHT and LLR domains); this interaction is enhanced in the presence of NLRP3 inflammasome inducers, such as ATP, nigericin, silica, or alum. Interacts with ZDHHC12.

It is found in the cytoplasm. Negatively regulates NLRP3-driven inflammation. Promotes NLRP3 degradation through the chaperone-mediated autophagy (CMA) pathway, hence attenuating inflammasome activation and IL1B secretion. Acts by recruiting palmitoyltransferase ZDHHC12 to NLRP3, facilitating NLRP3 palmitoylation and subsequent degradation. In Mus musculus (Mouse), this protein is Protein ABHD8.